Here is a 597-residue protein sequence, read N- to C-terminus: Elongation factor 4 (597 aa).

The region spanning 2 to 184 is the tr-type G domain; it reads KHIRNFSIIA…NIVTAIPPPE (183 aa). Residues 14–19 and 131–134 each bind GTP; these read DHGKST and NKID.

Belongs to the TRAFAC class translation factor GTPase superfamily. Classic translation factor GTPase family. LepA subfamily.

The protein localises to the cell inner membrane. It catalyses the reaction GTP + H2O = GDP + phosphate + H(+). Required for accurate and efficient protein synthesis under certain stress conditions. May act as a fidelity factor of the translation reaction, by catalyzing a one-codon backward translocation of tRNAs on improperly translocated ribosomes. Back-translocation proceeds from a post-translocation (POST) complex to a pre-translocation (PRE) complex, thus giving elongation factor G a second chance to translocate the tRNAs correctly. Binds to ribosomes in a GTP-dependent manner. In Vibrio atlanticus (strain LGP32) (Vibrio splendidus (strain Mel32)), this protein is Elongation factor 4.